Reading from the N-terminus, the 347-residue chain is sn-1 oleoyl-lipid 12-desaturase (347 aa).

The next 2 helical transmembrane spans lie at 41-63 (AWSR…AIAP) and 67-85 (LLPV…FVIG). A Histidine box-1 motif is present at residues 86–90 (HDCGH). A helical membrane pass occupies residues 98-118 (WVNNLVGHLAFLPLIYPFHSW). The short motif at 122–126 (HNHHH) is the Histidine box-2 element. The next 3 helical transmembrane spans lie at 164–184 (LWWL…FAFE), 196–216 (LFVI…LGVW), and 218–238 (VVKF…TFTL). Positions 286 to 290 (HHLST) match the Histidine box-3 motif.

This sequence belongs to the fatty acid desaturase type 2 family. The cofactor is Fe(2+).

Its subcellular location is the membrane. It carries out the reaction a 1-[(9Z)-octadecenoyl]-2-acyl-glycerolipid + 2 reduced [2Fe-2S]-[ferredoxin] + O2 + 2 H(+) = a 1-[(9Z,12Z)-octadecdienoyl]-2-acyl-glycerolipid + 2 oxidized [2Fe-2S]-[ferredoxin] + 2 H2O. The protein operates within lipid metabolism; polyunsaturated fatty acid biosynthesis. Desaturase involved in fatty acid biosynthesis. Introduces a double bond at carbon 12 of oleoyl groups (18:1) attached to the sn-1 position of the glycerol moiety of membrane glycerolipids. Can also efficiently catalyze the desaturation of palmitoleic acid (16:1) in vitro. This chain is sn-1 oleoyl-lipid 12-desaturase, found in Picosynechococcus sp. (strain ATCC 27264 / PCC 7002 / PR-6) (Agmenellum quadruplicatum).